Here is a 101-residue protein sequence, read N- to C-terminus: Small ribosomal subunit protein uS14 (101 aa).

This sequence belongs to the universal ribosomal protein uS14 family. Part of the 30S ribosomal subunit. Contacts proteins S3 and S10.

Binds 16S rRNA, required for the assembly of 30S particles and may also be responsible for determining the conformation of the 16S rRNA at the A site. The protein is Small ribosomal subunit protein uS14 of Gluconacetobacter diazotrophicus (strain ATCC 49037 / DSM 5601 / CCUG 37298 / CIP 103539 / LMG 7603 / PAl5).